Consider the following 141-residue polypeptide: HTH-type transcriptional regulator LrpA (141 aa).

The HTH asnC-type domain occupies 2–63 (VDERDKIILD…KINPKKLGYS (62 aa)). A DNA-binding region (H-T-H motif) is located at residues 21–40 (FTEIAKILGISETAVRKRVK).

In terms of assembly, homooctamer; tetramer of dimers.

Functionally, DNA-binding protein that negatively regulates its own transcription. Interferes with RNA polymerase (RNAP) recruitment by inhibiting the association of RNAP with the TBP-TFB promoter complex. This Pyrococcus abyssi (strain GE5 / Orsay) protein is HTH-type transcriptional regulator LrpA (lrpA).